Reading from the N-terminus, the 920-residue chain is Rho guanine nucleotide exchange factor 1 (920 aa).

The region spanning 39 to 230 (DQNSQFQSLE…SLYMRHLGVR (192 aa)) is the RGSL domain. Residues 231-404 (TKSGDKKSGR…PGWRELVPPD (174 aa)) form a disordered region. The span at 281–311 (DCRHLKVEADAEKPGPADRKGGLGMSSRDRT) shows a compositional bias: basic and acidic residues. Positions 364 to 380 (STEDNGETESPEPGDDG) are enriched in acidic residues. Ser373, Gly386, Glu390, Ser408, and Ser412 each carry phosphoserine. One can recognise a DH domain in the interval 415–604 (KRQEVISELL…REILHHVNQA (190 aa)). 2 positions are modified to phosphothreonine: Arg432 and Thr694. The region spanning 646–759 (KLVHEGPLTW…WCNLITETAG (114 aa)) is the PH domain. The residue at position 737 (Tyr737) is a Phosphotyrosine; by JAK2. 2 disordered regions span residues 764–797 (PAPA…AEMA) and 840–864 (TEED…PGPV). Positions 865–894 (HTQEIEENLLSLEVAIRQLEELEEEFCRLR) form a coiled coil. Ser905 carries the phosphoserine modification.

In terms of assembly, interacts with RHOA, GNA12 and GNA13. Homooligomerizes through the coiled coil region. Interacts with CTNNAL1. May interact with CCPG1. Post-translationally, phosphorylated by PKCA. Angiotensin-2 induced Tyr-737 phosphorylation is mediated by JAK2. Isoform 5 is phosphorylated at 'Ser-390'. In terms of tissue distribution, ubiquitously expressed.

Its subcellular location is the cytoplasm. It localises to the membrane. In terms of biological role, seems to play a role in the regulation of RhoA GTPase by guanine nucleotide-binding alpha-12 (GNA12) and alpha-13 (GNA13) subunits. Acts as a GTPase-activating protein (GAP) for GNA12 and GNA13, and as guanine nucleotide exchange factor (GEF) for RhoA GTPase. Activated G alpha 13/GNA13 stimulates the RhoGEF activity through interaction with the RGS-like domain. This GEF activity is inhibited by binding to activated GNA12. Mediates angiotensin-2-induced RhoA activation. Isoform 3 and isoform 4 do not homooligomerize and show an enhanced RhoGEF activity. In lymphoid follicles, may trigger activation of GNA13 as part of S1PR2-dependent signaling pathway that leads to inhibition of germinal center (GC) B cell growth and migration outside the GC niche. This Mus musculus (Mouse) protein is Rho guanine nucleotide exchange factor 1 (Arhgef1).